A 721-amino-acid chain; its full sequence is Polyribonucleotide nucleotidyltransferase (721 aa).

Mg(2+) contacts are provided by aspartate 490 and aspartate 496. The 62-residue stretch at 557-618 (PRILTLKINP…EAVRQKIEGL (62 aa)) folds into the KH domain. In terms of domain architecture, S1 motif spans 625–693 (GEEYEGTVVK…DRGKIDLIRP (69 aa)). Positions 696–721 (EGKIAPREPRAARAGGDRGGRPPRRE) are disordered.

This sequence belongs to the polyribonucleotide nucleotidyltransferase family. Requires Mg(2+) as cofactor.

The protein localises to the cytoplasm. The catalysed reaction is RNA(n+1) + phosphate = RNA(n) + a ribonucleoside 5'-diphosphate. Its function is as follows. Involved in mRNA degradation. Catalyzes the phosphorolysis of single-stranded polyribonucleotides processively in the 3'- to 5'-direction. The chain is Polyribonucleotide nucleotidyltransferase from Deinococcus geothermalis (strain DSM 11300 / CIP 105573 / AG-3a).